Here is a 286-residue protein sequence, read N- to C-terminus: Glycine--tRNA ligase alpha subunit (286 aa).

It belongs to the class-II aminoacyl-tRNA synthetase family. Tetramer of two alpha and two beta subunits.

Its subcellular location is the cytoplasm. It carries out the reaction tRNA(Gly) + glycine + ATP = glycyl-tRNA(Gly) + AMP + diphosphate. The chain is Glycine--tRNA ligase alpha subunit from Campylobacter concisus (strain 13826).